We begin with the raw amino-acid sequence, 727 residues long: Glycerol-3-phosphate dehydrogenase, mitochondrial (727 aa).

A mitochondrion-targeting transit peptide spans 1-42 (MAFQKAVKGTILVGGGALATVLGLSHFAHYKRKQVNLAFVEA). Residue 71-99 (DVLVIGGGATGSGCALDAVTRGLKTALVE) participates in FAD binding. A Phosphotyrosine modification is found at Y601. EF-hand domains are found at residues 623–658 (SDIDRYKKRFHKFDADQKGFITIVDVQRVLESIGVQ) and 659–694 (MDENTLHEILNEVDLNKNGQVELNEFLQLMSAIQKG). Ca(2+) contacts are provided by D672, N674, N676, Q678, and E683.

This sequence belongs to the FAD-dependent glycerol-3-phosphate dehydrogenase family. The cofactor is FAD.

It localises to the mitochondrion. The catalysed reaction is a quinone + sn-glycerol 3-phosphate = dihydroxyacetone phosphate + a quinol. Its pathway is polyol metabolism; glycerol degradation via glycerol kinase pathway; glycerone phosphate from sn-glycerol 3-phosphate (aerobic route): step 1/1. Calcium-binding enhance the activity of the enzyme. In terms of biological role, calcium-responsive mitochondrial glycerol-3-phosphate dehydrogenase which seems to be a key component of the pancreatic beta-cell glucose-sensing device. The polypeptide is Glycerol-3-phosphate dehydrogenase, mitochondrial (GPD2) (Bos taurus (Bovine)).